We begin with the raw amino-acid sequence, 485 residues long: Aspartyl protease family protein 2 (485 aa).

A signal peptide spans 1-23 (MVGRRKALLFSLCFFFLSLPSFS). A disordered region spans residues 43–71 (PVSFQPDSDSESLLESEFESGSDSESSSS). The segment covering 50 to 64 (SDSESLLESEFESGS) has biased composition (acidic residues). Residues 142-480 (YFTRLGVGTP…DLASSRVGFA (339 aa)) enclose the Peptidase A1 domain. Active-site residues include Asp-160 and Asp-365.

The protein belongs to the peptidase A1 family.

In terms of biological role, aspartyl protease. Not able to cleave BAG6. This is Aspartyl protease family protein 2 from Arabidopsis thaliana (Mouse-ear cress).